Consider the following 185-residue polypeptide: MINEIKKETEDKMKKTVEALRKEYQHIRAGRANPALLEKVTVEYYGAPTPVNQLANISAPEARLLVIQPWDKSVLPALEKAILKSDLGLTPTSDGAVIRLVIPQLTQERRSELVKTVKKRAEEHRVILRNLRRDANEDVKDLQKEHIISEDEGKRAQEEIQKLTDKYIREVDQVAERKEAEIMEV.

Belongs to the RRF family.

It localises to the cytoplasm. Responsible for the release of ribosomes from messenger RNA at the termination of protein biosynthesis. May increase the efficiency of translation by recycling ribosomes from one round of translation to another. In Heliobacterium modesticaldum (strain ATCC 51547 / Ice1), this protein is Ribosome-recycling factor.